The primary structure comprises 284 residues: L-ribulose-5-phosphate 3-epimerase UlaE (284 aa).

It belongs to the L-ribulose-5-phosphate 3-epimerase family.

The catalysed reaction is L-ribulose 5-phosphate = L-xylulose 5-phosphate. Its pathway is cofactor degradation; L-ascorbate degradation; D-xylulose 5-phosphate from L-ascorbate: step 3/4. Functionally, catalyzes the isomerization of L-xylulose-5-phosphate to L-ribulose-5-phosphate. Is involved in the anaerobic L-ascorbate utilization. The chain is L-ribulose-5-phosphate 3-epimerase UlaE from Salmonella heidelberg (strain SL476).